Consider the following 143-residue polypeptide: Large ribosomal subunit protein uL11 (143 aa).

It belongs to the universal ribosomal protein uL11 family. Part of the ribosomal stalk of the 50S ribosomal subunit. Interacts with L10 and the large rRNA to form the base of the stalk. L10 forms an elongated spine to which L12 dimers bind in a sequential fashion forming a multimeric L10(L12)X complex. In terms of processing, one or more lysine residues are methylated.

Forms part of the ribosomal stalk which helps the ribosome interact with GTP-bound translation factors. This chain is Large ribosomal subunit protein uL11, found in Pseudomonas entomophila (strain L48).